We begin with the raw amino-acid sequence, 493 residues long: High affinity nitrate transporter 2.7 (493 aa).

Residues 1–19 (MEPSQRNTKPPSFSDSTIP) are compositionally biased toward polar residues. Residues 1-20 (MEPSQRNTKPPSFSDSTIPV) form a disordered region. 12 consecutive transmembrane segments (helical) span residues 46–66 (WLSLFSCFFSTFSIPPLVPVI), 70–90 (LNLSASTVSAAGIASFAGSIF), 113–133 (FLTAPVILSASLVSSPTSFIL), 136–156 (FFVGFSLANFVANQYWMSSMF), 174–194 (VGAGISQLLMPLIYSTIAEFL), 202–222 (VSFVFPAIFQVTTAVLVLLYG), 257–277 (FVEILIGGLGNYRAWILALLY), 299–319 (FGVNLEAAGTIAASFGISNIA), 341–361 (LWGLWIVQSVAGLLCVLLGRV), 368–388 (ILVMWVFSVFVQAASGLVFGV), 400–420 (VAGITGSGGTVGAVVTQFLLF), and 431–451 (ISLMGLMTFVFALSVTSIYFP).

The protein belongs to the major facilitator superfamily. Nitrate/nitrite porter (TC 2.A.1.8) family. As to expression, expressed in seeds, leaves and shoots. Lower expression in roots.

It localises to the vacuole membrane. Involved in high-affinity nitrate transport. Controls nitrate content in seeds. The polypeptide is High affinity nitrate transporter 2.7 (NRT2.7) (Arabidopsis thaliana (Mouse-ear cress)).